Consider the following 653-residue polypeptide: Probable sulfate transporter 3.4 (653 aa).

Residues 1–92 (MGHGTNRVED…QYDLKLLRSD (92 aa)) lie on the Cytoplasmic side of the membrane. Residues 93–113 (VISGLTIASLAIPQGISYAKL) traverse the membrane as a helical segment. The Extracellular portion of the chain corresponds to 114-115 (AN). The helical transmembrane segment at 116–136 (LPPIVGLYSSFVPPLIYAVLG) threads the bilayer. Topologically, residues 137-140 (SSRH) are cytoplasmic. A helical membrane pass occupies residues 141–161 (LAVGPVSIASLVMGSMLSESV). Residues 162–167 (SPTQDS) are Extracellular-facing. Residues 168–188 (ILYLKLAFTSTFFAGVFQASL) traverse the membrane as a helical segment. Residues 189–194 (GLLRLG) lie on the Cytoplasmic side of the membrane. Residues 195-215 (FMIDFLSKATLIGFTAGAAVI) form a helical membrane-spanning segment. Residues 216–247 (VSLQQLKGLLGIVHFTGKMQIVPVMSSVFNHR) are Extracellular-facing. The helical transmembrane segment at 248-268 (SEWSWETIVMGIGFLSILLTT) threads the bilayer. The Cytoplasmic portion of the chain corresponds to 269 to 279 (RHISMRKPKLF). Residues 280–300 (WISAASPLASVIISTLLVYLI) traverse the membrane as a helical segment. The Extracellular portion of the chain corresponds to 301–331 (RSKTHAISFIGHLPKGLNPPSLNMLYFSGAH). Residues 332–352 (LALAIKTGIITGILSLTEGIA) traverse the membrane as a helical segment. The Cytoplasmic segment spans residues 353–370 (VGRTFASLKNYQVNGNKE). A helical membrane pass occupies residues 371–391 (MMAIGFMNMAGSCTSCYVTTG). Over 392-407 (SFSRSAVNYNAGAKTA) the chain is Extracellular. Residues 408–428 (VSNIVMASAVLVTLLFLMPLF) traverse the membrane as a helical segment. Residues 429–433 (YYTPN) lie on the Cytoplasmic side of the membrane. A helical transmembrane segment spans residues 434-454 (VILAAIILTAVIGLIDYQAAY). Residues 455 to 471 (KLWKVDKFDFFTCLCSF) lie on the Extracellular side of the membrane. Residues 472 to 492 (FGVLFVSVPLGLAIAVAVSVI) traverse the membrane as a helical segment. The Cytoplasmic segment spans residues 493 to 653 (KILLHVTRPN…SSTWKANGQP (161 aa)). Residues 520–643 (RYREASRIPG…LTVGEAVADL (124 aa)) enclose the STAS domain.

It belongs to the SLC26A/SulP transporter (TC 2.A.53) family.

It localises to the membrane. Its function is as follows. H(+)/sulfate cotransporter that may play a role in the regulation of sulfate assimilation. This Arabidopsis thaliana (Mouse-ear cress) protein is Probable sulfate transporter 3.4 (SULTR3;4).